Consider the following 184-residue polypeptide: ATP-dependent protease subunit HslV (184 aa).

Thr-12 is an active-site residue. Na(+) is bound by residues Ala-166, Cys-169, and Thr-172.

The protein belongs to the peptidase T1B family. HslV subfamily. A double ring-shaped homohexamer of HslV is capped on each side by a ring-shaped HslU homohexamer. The assembly of the HslU/HslV complex is dependent on binding of ATP.

The protein resides in the cytoplasm. The enzyme catalyses ATP-dependent cleavage of peptide bonds with broad specificity.. With respect to regulation, allosterically activated by HslU binding. Its function is as follows. Protease subunit of a proteasome-like degradation complex believed to be a general protein degrading machinery. This Brucella ovis (strain ATCC 25840 / 63/290 / NCTC 10512) protein is ATP-dependent protease subunit HslV.